A 134-amino-acid polypeptide reads, in one-letter code: DNA-binding protein inhibitor ID-2 (134 aa).

Residues Ser14 and Ser25 each carry the phosphoserine modification. A bHLH domain is found at 23–75 (SRSKTPVDDPMSLLYNMNDCYSKLKELVPSIPQNKKVSKMEILQHVIDYILDL). Residues 106–115 (LNTDISILSL) carry the Nuclear export signal motif.

Interacts with GATA4 and NKX2-5. Interacts with NR0B2. Interacts with CLOCK and BMAL1. Interacts with IFI204. Interacts with NEDD9/HEF1. Interacts with ASB4; this interaction promotes ID2 proteasomal degradation. Post-translationally, ubiquitinated in a ASB4-depedent manner, leading to proteasomal degradation. In terms of processing, phosphorylated in vitro by CDK1, PKA and PKC.

It is found in the cytoplasm. The protein resides in the nucleus. Transcriptional regulator (lacking a basic DNA binding domain) which negatively regulates the basic helix-loop-helix (bHLH) transcription factors by forming heterodimers and inhibiting their DNA binding and transcriptional activity. Implicated in regulating a variety of cellular processes, including cellular growth, senescence, differentiation, apoptosis, angiogenesis, and neoplastic transformation. Inhibits skeletal muscle and cardiac myocyte differentiation. Regulates the circadian clock by repressing the transcriptional activator activity of the CLOCK-BMAL1 heterodimer. Restricts the CLOCK and BMAL1 localization to the cytoplasm. Plays a role in both the input and output pathways of the circadian clock: in the input component, is involved in modulating the magnitude of photic entrainment and in the output component, contributes to the regulation of a variety of liver clock-controlled genes involved in lipid metabolism. The protein is DNA-binding protein inhibitor ID-2 (ID2) of Sus scrofa (Pig).